A 546-amino-acid polypeptide reads, in one-letter code: Chaperonin GroEL 3 (546 aa).

ATP is bound by residues Thr30 to Pro33, Lys51, Asp87 to Thr91, Gly415, and Asp496.

Belongs to the chaperonin (HSP60) family. As to quaternary structure, forms a cylinder of 14 subunits composed of two heptameric rings stacked back-to-back. Interacts with the co-chaperonin GroES.

The protein localises to the cytoplasm. The enzyme catalyses ATP + H2O + a folded polypeptide = ADP + phosphate + an unfolded polypeptide.. Together with its co-chaperonin GroES, plays an essential role in assisting protein folding. The GroEL-GroES system forms a nano-cage that allows encapsulation of the non-native substrate proteins and provides a physical environment optimized to promote and accelerate protein folding. In Bradyrhizobium diazoefficiens (strain JCM 10833 / BCRC 13528 / IAM 13628 / NBRC 14792 / USDA 110), this protein is Chaperonin GroEL 3.